The chain runs to 85 residues: Small ribosomal subunit protein uS17 (85 aa).

Belongs to the universal ribosomal protein uS17 family. Part of the 30S ribosomal subunit.

Functionally, one of the primary rRNA binding proteins, it binds specifically to the 5'-end of 16S ribosomal RNA. This is Small ribosomal subunit protein uS17 from Aggregatibacter actinomycetemcomitans (Actinobacillus actinomycetemcomitans).